A 118-amino-acid polypeptide reads, in one-letter code: Large ribosomal subunit protein uL24 (118 aa).

It belongs to the universal ribosomal protein uL24 family. In terms of assembly, part of the 50S ribosomal subunit.

One of two assembly initiator proteins, it binds directly to the 5'-end of the 23S rRNA, where it nucleates assembly of the 50S subunit. In terms of biological role, one of the proteins that surrounds the polypeptide exit tunnel on the outside of the subunit. The polypeptide is Large ribosomal subunit protein uL24 (Prochlorococcus marinus (strain MIT 9515)).